The chain runs to 146 residues: Large ribosomal subunit protein uL15 (146 aa).

Residues 1–13 (MKLHELKPAEGSR) show a composition bias toward basic and acidic residues. Positions 1–47 (MKLHELKPAEGSRKSRKRIGRGTGSGLGRNAGKGEKGQKARAGGGVR) are disordered. Gly residues predominate over residues 21-31 (RGTGSGLGRNA).

Belongs to the universal ribosomal protein uL15 family. As to quaternary structure, part of the 50S ribosomal subunit.

Its function is as follows. Binds to the 23S rRNA. The protein is Large ribosomal subunit protein uL15 of Clostridium kluyveri (strain NBRC 12016).